The chain runs to 359 residues: Phosphoserine aminotransferase (359 aa).

Residues Ser9 and Arg42 each contribute to the L-glutamate site. Pyridoxal 5'-phosphate is bound by residues 76–77 (AS), Trp102, Thr152, Asp171, and Gln194. At Lys195 the chain carries N6-(pyridoxal phosphate)lysine. 236–237 (NT) contributes to the pyridoxal 5'-phosphate binding site.

This sequence belongs to the class-V pyridoxal-phosphate-dependent aminotransferase family. SerC subfamily. Homodimer. It depends on pyridoxal 5'-phosphate as a cofactor.

It localises to the cytoplasm. It carries out the reaction O-phospho-L-serine + 2-oxoglutarate = 3-phosphooxypyruvate + L-glutamate. It catalyses the reaction 4-(phosphooxy)-L-threonine + 2-oxoglutarate = (R)-3-hydroxy-2-oxo-4-phosphooxybutanoate + L-glutamate. It participates in amino-acid biosynthesis; L-serine biosynthesis; L-serine from 3-phospho-D-glycerate: step 2/3. It functions in the pathway cofactor biosynthesis; pyridoxine 5'-phosphate biosynthesis; pyridoxine 5'-phosphate from D-erythrose 4-phosphate: step 3/5. In terms of biological role, catalyzes the reversible conversion of 3-phosphohydroxypyruvate to phosphoserine and of 3-hydroxy-2-oxo-4-phosphonooxybutanoate to phosphohydroxythreonine. In Marinomonas sp. (strain MWYL1), this protein is Phosphoserine aminotransferase.